A 151-amino-acid polypeptide reads, in one-letter code: S-protein homolog 27 (151 aa).

Residues N91 and N123 are each glycosylated (N-linked (GlcNAc...) asparagine).

This sequence belongs to the plant self-incompatibility (S1) protein family.

The protein localises to the secreted. In Arabidopsis thaliana (Mouse-ear cress), this protein is S-protein homolog 27.